The following is a 290-amino-acid chain: tRNA-cytidine(32) 2-sulfurtransferase (290 aa).

Positions 66–71 match the PP-loop motif motif; sequence SGGKDS. [4Fe-4S] cluster contacts are provided by Cys-141, Cys-144, and Cys-232.

It belongs to the TtcA family. As to quaternary structure, homodimer. Requires Mg(2+) as cofactor. [4Fe-4S] cluster serves as cofactor.

It localises to the cytoplasm. It carries out the reaction cytidine(32) in tRNA + S-sulfanyl-L-cysteinyl-[cysteine desulfurase] + AH2 + ATP = 2-thiocytidine(32) in tRNA + L-cysteinyl-[cysteine desulfurase] + A + AMP + diphosphate + H(+). Its pathway is tRNA modification. In terms of biological role, catalyzes the ATP-dependent 2-thiolation of cytidine in position 32 of tRNA, to form 2-thiocytidine (s(2)C32). The sulfur atoms are provided by the cysteine/cysteine desulfurase (IscS) system. In Rhizobium etli (strain ATCC 51251 / DSM 11541 / JCM 21823 / NBRC 15573 / CFN 42), this protein is tRNA-cytidine(32) 2-sulfurtransferase.